Reading from the N-terminus, the 318-residue chain is Acetyl-coenzyme A carboxylase carboxyl transferase subunit beta (318 aa).

Residues 25 to 294 (LWSKCSECGT…AVKGELPAPA (270 aa)) form the CoA carboxyltransferase N-terminal domain. Zn(2+) contacts are provided by C29, C32, C48, and C51. The C4-type zinc finger occupies 29 to 51 (CSECGTMLFHRELSDNLNVCTNC). Residues 286-318 (VKGELPAPAPLESDAETALASDTDPNGAPPSKD) are disordered.

It belongs to the AccD/PCCB family. As to quaternary structure, acetyl-CoA carboxylase is a heterohexamer composed of biotin carboxyl carrier protein (AccB), biotin carboxylase (AccC) and two subunits each of ACCase subunit alpha (AccA) and ACCase subunit beta (AccD). The cofactor is Zn(2+).

The protein localises to the cytoplasm. The enzyme catalyses N(6)-carboxybiotinyl-L-lysyl-[protein] + acetyl-CoA = N(6)-biotinyl-L-lysyl-[protein] + malonyl-CoA. Its pathway is lipid metabolism; malonyl-CoA biosynthesis; malonyl-CoA from acetyl-CoA: step 1/1. Its function is as follows. Component of the acetyl coenzyme A carboxylase (ACC) complex. Biotin carboxylase (BC) catalyzes the carboxylation of biotin on its carrier protein (BCCP) and then the CO(2) group is transferred by the transcarboxylase to acetyl-CoA to form malonyl-CoA. The protein is Acetyl-coenzyme A carboxylase carboxyl transferase subunit beta of Jannaschia sp. (strain CCS1).